The sequence spans 272 residues: TLC domain-containing protein 4 C (272 aa).

The next 7 helical transmembrane spans lie at 16–36 (FSNS…FIIY), 71–91 (VSMI…VESF), 103–123 (SLLM…IICY), 128–148 (LVGT…IYVA), 155–175 (CFVP…PLNM), 196–216 (FVIT…IYLV), and 233–253 (VFIT…FLLI). A TLC domain is found at 61-261 (KKKLEWDQRV…LIKKLYQTYL (201 aa)).

It belongs to the TLCD4 family.

It is found in the membrane. This chain is TLC domain-containing protein 4 C (tlcd4c), found in Dictyostelium discoideum (Social amoeba).